Here is a 295-residue protein sequence, read N- to C-terminus: Indole-3-glycerol phosphate synthase (295 aa).

The protein belongs to the TrpC family.

The enzyme catalyses 1-(2-carboxyphenylamino)-1-deoxy-D-ribulose 5-phosphate + H(+) = (1S,2R)-1-C-(indol-3-yl)glycerol 3-phosphate + CO2 + H2O. It functions in the pathway amino-acid biosynthesis; L-tryptophan biosynthesis; L-tryptophan from chorismate: step 4/5. The protein is Indole-3-glycerol phosphate synthase of Prochlorococcus marinus (strain MIT 9215).